Consider the following 198-residue polypeptide: MTYDKDWALRWLNDFGERVQENKQLLSDLDQAIGDGDHGINMARGLSELKKAFTEKEPADLTDVFKTAGMTMVSKVGGASGPLYGTAFLNMSKAVDSETIDAEGLTKVIEAGLEGIEKRGKSHAGEKTMIDVWEPVVNALHQEDLTDDVVEAALQKTKDLKATKGRASYLGERSIGHLDPGAYSSALLFHAMLQTEVS.

One can recognise a DhaL domain in the interval Asp6–Gln194. Positions 30, 35, and 37 each coordinate Mg(2+). ADP contacts are provided by residues His38–Asn41, Ala79–Ser80, Gly120, Met129, Arg166, and Asp179–Gly181.

In terms of assembly, homodimer. The dihydroxyacetone kinase complex is composed of a homodimer of DhaM, a homodimer of DhaK and the subunit DhaL. Requires Mg(2+) as cofactor.

The protein resides in the cytoplasm. The enzyme catalyses dihydroxyacetone + phosphoenolpyruvate = dihydroxyacetone phosphate + pyruvate. It participates in polyol metabolism; glycerol degradation. Its function is as follows. ADP-binding subunit of the dihydroxyacetone kinase, which is responsible for the phosphoenolpyruvate (PEP)-dependent phosphorylation of dihydroxyacetone. DhaL-ADP is converted to DhaL-ATP via a phosphoryl group transfer from DhaM and transmits it to dihydroxyacetone binds to DhaK. The polypeptide is PEP-dependent dihydroxyacetone kinase 1, ADP-binding subunit DhaL (Listeria innocua serovar 6a (strain ATCC BAA-680 / CLIP 11262)).